We begin with the raw amino-acid sequence, 244 residues long: Flavin-dependent thymidylate synthase (244 aa).

The ThyX domain maps to 17–239 (ITVELVKHSA…PETHAAFEKQ (223 aa)). Residues serine 68, 91 to 93 (RHR), and glutamate 99 each bind FAD. Residues 88–91 (EFMR), 99–103 (EESGR), and arginine 171 contribute to the dUMP site. The short motif at 91-101 (RHRIASYNEES) is the ThyX motif element. FAD is bound by residues 187–189 (NAR) and asparagine 193. A dUMP-binding site is contributed by arginine 198. Catalysis depends on arginine 198, which acts as the Involved in ionization of N3 of dUMP, leading to its activation.

The protein belongs to the thymidylate synthase ThyX family. In terms of assembly, homotetramer. Requires FAD as cofactor.

The enzyme catalyses dUMP + (6R)-5,10-methylene-5,6,7,8-tetrahydrofolate + NADPH + H(+) = dTMP + (6S)-5,6,7,8-tetrahydrofolate + NADP(+). The protein operates within pyrimidine metabolism; dTTP biosynthesis. Functionally, catalyzes the reductive methylation of 2'-deoxyuridine-5'-monophosphate (dUMP) to 2'-deoxythymidine-5'-monophosphate (dTMP) while utilizing 5,10-methylenetetrahydrofolate (mTHF) as the methyl donor, and NADPH and FADH(2) as the reductant. The protein is Flavin-dependent thymidylate synthase of Tropheryma whipplei (strain Twist) (Whipple's bacillus).